The sequence spans 349 residues: MAWIEPEVTEKPKKPMFLCVLSSTKTAHIPKLSAAGKTAELTDYTPAGDAELMETGNIISVPVLPMTPPYDTPTPAIMTRSALKLTDAPYHFINSGLIVTPDVPCIDLKANPGEDIREPVAVMDVQGIYERAKLLAKRLRNQADHVVIGESIPGGTTTAMGVLMALGYNGNVSSSADENPLELKKQVVEEGMKASGLTFGCLKDDPMKAIACMGDPMMPAVAGLVAGFQDTDTSVVLAGGTQMAAVYALIKHMGLNTEKIAIATTRYVVEDKSANFIQLTTTLGVPVVYVADPGFGKSSMKGLHRYETGTIKEGAGAGGAMYLAGLFGITQDQFRTEVENVCKLLKAGH.

Belongs to the UPF0284 family.

This is UPF0284 protein MM_0708 from Methanosarcina mazei (strain ATCC BAA-159 / DSM 3647 / Goe1 / Go1 / JCM 11833 / OCM 88) (Methanosarcina frisia).